The following is a 247-amino-acid chain: Ubiquinone biosynthesis O-methyltransferase (247 aa).

S-adenosyl-L-methionine contacts are provided by arginine 41, glycine 72, aspartate 93, and methionine 136.

The protein belongs to the methyltransferase superfamily. UbiG/COQ3 family.

The enzyme catalyses a 3-demethylubiquinol + S-adenosyl-L-methionine = a ubiquinol + S-adenosyl-L-homocysteine + H(+). It carries out the reaction a 3-(all-trans-polyprenyl)benzene-1,2-diol + S-adenosyl-L-methionine = a 2-methoxy-6-(all-trans-polyprenyl)phenol + S-adenosyl-L-homocysteine + H(+). It participates in cofactor biosynthesis; ubiquinone biosynthesis. In terms of biological role, O-methyltransferase that catalyzes the 2 O-methylation steps in the ubiquinone biosynthetic pathway. In Bartonella tribocorum (strain CIP 105476 / IBS 506), this protein is Ubiquinone biosynthesis O-methyltransferase.